We begin with the raw amino-acid sequence, 274 residues long: NADPH-dependent 7-cyano-7-deazaguanine reductase (274 aa).

A substrate-binding site is contributed by 80 to 82; the sequence is VES. 82 to 83 provides a ligand contact to NADPH; the sequence is SK. Cysteine 181 acts as the Thioimide intermediate in catalysis. Aspartate 188 functions as the Proton donor in the catalytic mechanism. 220-221 provides a ligand contact to substrate; sequence HE. An NADPH-binding site is contributed by 249 to 250; the sequence is RG.

The protein belongs to the GTP cyclohydrolase I family. QueF type 2 subfamily. As to quaternary structure, homodimer.

It is found in the cytoplasm. The catalysed reaction is 7-aminomethyl-7-carbaguanine + 2 NADP(+) = 7-cyano-7-deazaguanine + 2 NADPH + 3 H(+). It functions in the pathway tRNA modification; tRNA-queuosine biosynthesis. Catalyzes the NADPH-dependent reduction of 7-cyano-7-deazaguanine (preQ0) to 7-aminomethyl-7-deazaguanine (preQ1). This is NADPH-dependent 7-cyano-7-deazaguanine reductase from Burkholderia lata (strain ATCC 17760 / DSM 23089 / LMG 22485 / NCIMB 9086 / R18194 / 383).